The sequence spans 611 residues: Oxidoreductase cicC (611 aa).

The signal sequence occupies residues 1–20 (MALRYLNKFSLLSLAVPTLA). Residues 45 to 46 (NA) and 65 to 66 (EA) each bind FAD. 2 N-linked (GlcNAc...) asparagine glycosylation sites follow: Asn-76 and Asn-113. FAD-binding positions include Val-123 and 131 to 134 (NLMT). N-linked (GlcNAc...) asparagine glycosylation is found at Asn-282, Asn-410, and Asn-475. The Proton acceptor role is filled by His-547. Residue His-547 is the Proton donor of the active site. Residue Ala-581 coordinates FAD. His-591 (proton acceptor) is an active-site residue. 592–593 (PI) provides a ligand contact to FAD.

Belongs to the GMC oxidoreductase family. FAD is required as a cofactor.

It functions in the pathway phytotoxin biosynthesis. Its function is as follows. Oxidoreductase; part of the gene cluster that mediates the biosynthesis of cichorine, a phytotoxin active against knapweed, corn, and soybeans. The first step in the pathway is performed by the non-reducing polyketide synthase pkbA that condenses one acetyl-CoA starter unit with 3 malonyl-CoA units. PkbA also catalyzes one methylation step to produce 3-methylorsellinate. The nonribosomal peptide synthase-like protein cicB, the cytochrome P450 monooxygenase cicH and the O-methyltransferase cicE are involved in the conversion of 3-methylorsellinate into nidulol. CicB converts 3-methylorsellinate to a yet unidentified intermediate, cicH may play a ring-closing role for cichorine and cicE is plausibly responsible for the methylation of one of the phenol groups. The oxidoreductase cicC acts downstream with still unidentified enzymes to further convert nidulol into cichorine. The protein is Oxidoreductase cicC of Emericella nidulans (strain FGSC A4 / ATCC 38163 / CBS 112.46 / NRRL 194 / M139) (Aspergillus nidulans).